Reading from the N-terminus, the 349-residue chain is MDDLENIIFNSVEEEIIYWKSVAMKYKQCSEEAQQELQEFQEASREYEAELEAQLQQTEGRNRDIFSENNRLRMELDSIKEKYEEQHSENYIQISTLEGDLSTTKAVRDQLQKYIRELEQANDDLERAKRATIMSLEDFEQRLNQAIERNAFLESELDEKENVLESVQRLKDEARDLRQELAVQQKQEKPKSNMVSPETERMDTSVQASIAIPLAPLTPLSQRGCASTLNSPLSFKTSWDDGYSGTPLTPCARISALNIVGDLLRKVGALESKLASCRNFVHEQSPNRPLTSVSARMNKTREGIENRLSIASGSSVEKGLIKRLEFGSLPSNTPMQGMRSPQGVVKIII.

Residues 22–189 adopt a coiled-coil conformation; the sequence is VAMKYKQCSE…ELAVQQKQEK (168 aa).

It belongs to the nudE family. As to quaternary structure, self-associates. Interacts with pafah1b1. In terms of processing, phosphorylated in mitosis.

The protein resides in the cytoplasm. It is found in the cytoskeleton. The protein localises to the microtubule organizing center. It localises to the centrosome. Its subcellular location is the spindle. The protein resides in the chromosome. It is found in the centromere. The protein localises to the kinetochore. It localises to the cleavage furrow. Its subcellular location is the cytoplasmic vesicle membrane. In terms of biological role, required for centrosome duplication and formation and function of the mitotic spindle. The polypeptide is Nuclear distribution protein nudE homolog 1-B (nde1-b) (Xenopus laevis (African clawed frog)).